The primary structure comprises 205 residues: Thiamine-phosphate synthase (205 aa).

4-amino-2-methyl-5-(diphosphooxymethyl)pyrimidine-binding positions include 37–41 (QVREK) and Asn69. Mg(2+)-binding residues include Asp70 and Asp89. Ser108 serves as a coordination point for 4-amino-2-methyl-5-(diphosphooxymethyl)pyrimidine. A 2-[(2R,5Z)-2-carboxy-4-methylthiazol-5(2H)-ylidene]ethyl phosphate-binding site is contributed by 134-136 (TGS). Lys137 contacts 4-amino-2-methyl-5-(diphosphooxymethyl)pyrimidine. 2-[(2R,5Z)-2-carboxy-4-methylthiazol-5(2H)-ylidene]ethyl phosphate is bound by residues Gly165 and 185-186 (IS).

It belongs to the thiamine-phosphate synthase family. The cofactor is Mg(2+).

It catalyses the reaction 2-[(2R,5Z)-2-carboxy-4-methylthiazol-5(2H)-ylidene]ethyl phosphate + 4-amino-2-methyl-5-(diphosphooxymethyl)pyrimidine + 2 H(+) = thiamine phosphate + CO2 + diphosphate. The catalysed reaction is 2-(2-carboxy-4-methylthiazol-5-yl)ethyl phosphate + 4-amino-2-methyl-5-(diphosphooxymethyl)pyrimidine + 2 H(+) = thiamine phosphate + CO2 + diphosphate. It carries out the reaction 4-methyl-5-(2-phosphooxyethyl)-thiazole + 4-amino-2-methyl-5-(diphosphooxymethyl)pyrimidine + H(+) = thiamine phosphate + diphosphate. It functions in the pathway cofactor biosynthesis; thiamine diphosphate biosynthesis; thiamine phosphate from 4-amino-2-methyl-5-diphosphomethylpyrimidine and 4-methyl-5-(2-phosphoethyl)-thiazole: step 1/1. Condenses 4-methyl-5-(beta-hydroxyethyl)thiazole monophosphate (THZ-P) and 2-methyl-4-amino-5-hydroxymethyl pyrimidine pyrophosphate (HMP-PP) to form thiamine monophosphate (TMP). This chain is Thiamine-phosphate synthase, found in Clostridium botulinum (strain ATCC 19397 / Type A).